Reading from the N-terminus, the 954-residue chain is Glycine dehydrogenase (decarboxylating) (954 aa).

Lys-704 carries the N6-(pyridoxal phosphate)lysine modification.

Belongs to the GcvP family. As to quaternary structure, the glycine cleavage system is composed of four proteins: P, T, L and H. The cofactor is pyridoxal 5'-phosphate.

The catalysed reaction is N(6)-[(R)-lipoyl]-L-lysyl-[glycine-cleavage complex H protein] + glycine + H(+) = N(6)-[(R)-S(8)-aminomethyldihydrolipoyl]-L-lysyl-[glycine-cleavage complex H protein] + CO2. In terms of biological role, the glycine cleavage system catalyzes the degradation of glycine. The P protein binds the alpha-amino group of glycine through its pyridoxal phosphate cofactor; CO(2) is released and the remaining methylamine moiety is then transferred to the lipoamide cofactor of the H protein. The polypeptide is Glycine dehydrogenase (decarboxylating) (Rhizobium etli (strain ATCC 51251 / DSM 11541 / JCM 21823 / NBRC 15573 / CFN 42)).